The following is a 279-amino-acid chain: Energy-coupling factor transporter ATP-binding protein EcfA1 (279 aa).

The region spanning 5 to 240 (IELKKVTFNY…GDELLQLGLD (236 aa)) is the ABC transporter domain. An ATP-binding site is contributed by 40-47 (GHNGSGKS).

Belongs to the ABC transporter superfamily. Energy-coupling factor EcfA family. As to quaternary structure, forms a stable energy-coupling factor (ECF) transporter complex composed of 2 membrane-embedded substrate-binding proteins (S component), 2 ATP-binding proteins (A component) and 2 transmembrane proteins (T component).

The protein resides in the cell membrane. ATP-binding (A) component of a common energy-coupling factor (ECF) ABC-transporter complex. Unlike classic ABC transporters this ECF transporter provides the energy necessary to transport a number of different substrates. The polypeptide is Energy-coupling factor transporter ATP-binding protein EcfA1 (Streptococcus pyogenes serotype M5 (strain Manfredo)).